Consider the following 160-residue polypeptide: Transcription antitermination protein NusB (160 aa).

Belongs to the NusB family.

Functionally, involved in transcription antitermination. Required for transcription of ribosomal RNA (rRNA) genes. Binds specifically to the boxA antiterminator sequence of the ribosomal RNA (rrn) operons. This is Transcription antitermination protein NusB from Mycolicibacterium smegmatis (strain ATCC 700084 / mc(2)155) (Mycobacterium smegmatis).